The primary structure comprises 787 residues: Transcription factor SOX-6 (787 aa).

The interval 1–46 is disordered; that stretch reads MSSKQATSPFACAADGEDAMTQDLTSREKEEGSDQHVASHLPLHPI. Positions 25-34 are enriched in basic and acidic residues; sequence TSREKEEGSD. Position 119 is a phosphothreonine (Thr-119). Residues 184–262 adopt a coiled-coil conformation; the sequence is LAEKERQLST…LLQQQIQVQG (79 aa). The disordered stretch occupies residues 340–429; the sequence is PGAKMPSTPQ…KSSIPSPIGG (90 aa). The segment covering 352-361 has biased composition (polar residues); sequence NTAGTVSPTG. Residue Ser-358 is modified to Phosphoserine. Thr-360 is modified (phosphothreonine). Residues Lys-363 and Lys-376 each participate in a glycyl lysine isopeptide (Lys-Gly) (interchain with G-Cter in SUMO) cross-link. Residues Ser-398 and Ser-401 each carry the phosphoserine modification. Over residues 398–420 the composition is skewed to polar residues; it reads SPTSPTQNLFPASKTSPVNLPNK. A DNA-binding region (HMG box) is located at residues 580–648; the sequence is IKRPMNAFMV…IHLEKYPNYK (69 aa). Residues 712-740 show a composition bias toward polar residues; sequence TPSPQMTSDCSSTSASPEPSLPVIQSTYG. Positions 712–787 are disordered; sequence TPSPQMTSDC…NEAPEAVSAN (76 aa). Positions 755-768 are enriched in acidic residues; that stretch reads NGEDEMEMYDDYED.

Homodimer. Interacts with DAZAP2. May interact with CENPK. Sumoylation inhibits the transcriptional activity.

The protein resides in the nucleus. The protein localises to the cytoplasm. Its function is as follows. Transcription factor that plays a key role in several developmental processes, including neurogenesis, chondrocytes differentiation and cartilage formation. Specifically binds the 5'-AACAAT-3' DNA motif present in enhancers and super-enhancers and promotes expression of genes important for chondrogenesis. Required for overt chondrogenesis when condensed prechondrocytes differentiate into early stage chondrocytes: SOX5 and SOX6 cooperatively bind with SOX9 on active enhancers and super-enhancers associated with cartilage-specific genes, and thereby potentiate SOX9's ability to transactivate. Not involved in precartilaginous condensation, the first step in chondrogenesis, during which skeletal progenitors differentiate into prechondrocytes. Together with SOX5, required to form and maintain a pool of highly proliferating chondroblasts between epiphyses and metaphyses, to form columnar chondroblasts, delay chondrocyte prehypertrophy but promote hypertrophy, and to delay terminal differentiation of chondrocytes on contact with ossification fronts. Binds to the proximal promoter region of the myelin protein MPZ gene, and is thereby involved in the differentiation of oligodendroglia in the developing spinal tube. Binds to the gene promoter of MBP and acts as a transcriptional repressor. The chain is Transcription factor SOX-6 from Pongo abelii (Sumatran orangutan).